The following is a 146-amino-acid chain: Villin-like protein ABP41 (146 aa).

This sequence belongs to the villin/gelsolin family. In terms of assembly, binds to actin. In terms of tissue distribution, expressed in pollen (at protein level).

It is found in the cytoplasm. Its subcellular location is the cytoskeleton. In terms of biological role, ca(2+)-dependent actin filament-severing protein that is required for pollen tube growth. Probably regulates the dynamics of the actin cytoskeleton. It can promote the assembly of monomers into filaments (nucleation) as well as sever filaments already formed. This Lilium davidii (David's lily) protein is Villin-like protein ABP41.